A 261-amino-acid polypeptide reads, in one-letter code: MTLQAQDLSVDRGAKRILTQVSLTLEPGRMLGLLGANGAGKSTLLACLSGELEPVCGHIEINGKPLRSLASAKQARLRAVLPQKPSLSFDLGVREVVGMGAYPYAELSPADVDALCEKALRQAGVSHLAGRRYLELSGGEQQRVQFARVLMQCQAAPAGQPRYLMLDEPISNLDPRHQIDVLRTAHDLAREAGVGVLVIVHDVNLSARWCDRLLLLAQGSVVADGAPAEVLTPANLRRVYGVEADVLPHPREAGTLLVLMR.

In terms of domain architecture, ABC transporter spans 3–243; that stretch reads LQAQDLSVDR…ANLRRVYGVE (241 aa). ATP is bound at residue 35–42; sequence GANGAGKS.

This sequence belongs to the ABC transporter superfamily. Heme (hemin) importer (TC 3.A.1.14.5) family. The complex is composed of two ATP-binding proteins (HmuV), two transmembrane proteins (HmuU) and a solute-binding protein (HmuT).

The protein localises to the cell inner membrane. Part of the ABC transporter complex HmuTUV involved in hemin import. Responsible for energy coupling to the transport system. The sequence is that of Hemin import ATP-binding protein HmuV from Bordetella avium (strain 197N).